The sequence spans 38 residues: Turripeptide GpIAa (38 aa).

The protein belongs to the turripeptide family. Expressed by the venom duct.

It localises to the secreted. The chain is Turripeptide GpIAa from Cryptogemma periscelida (Atlantic gem-turris).